A 289-amino-acid polypeptide reads, in one-letter code: Glyceraldehyde-3-phosphate dehydrogenase (289 aa).

Positions 12 and 57 each coordinate NAD(+). Residues 128 to 130, Thr-159, 188 to 189, and Arg-211 each bind D-glyceraldehyde 3-phosphate; these read SCT and TG. Cys-129 acts as the Nucleophile in catalysis.

Belongs to the glyceraldehyde-3-phosphate dehydrogenase family. Homotetramer.

It is found in the cytoplasm. It catalyses the reaction D-glyceraldehyde 3-phosphate + phosphate + NAD(+) = (2R)-3-phospho-glyceroyl phosphate + NADH + H(+). It participates in carbohydrate degradation; glycolysis; pyruvate from D-glyceraldehyde 3-phosphate: step 1/5. The chain is Glyceraldehyde-3-phosphate dehydrogenase (GPD) from Amanita muscaria (Fly agaric).